Here is a 558-residue protein sequence, read N- to C-terminus: Glypican-1 (558 aa).

The signal sequence occupies residues 1–23 (MELRARGWWLLCAAAALVACARG). Disulfide bonds link cysteine 32–cysteine 68, cysteine 62–cysteine 256, cysteine 69–cysteine 259, cysteine 191–cysteine 343, cysteine 246–cysteine 279, cysteine 268–cysteine 415, and cysteine 272–cysteine 401. N-linked (GlcNAc...) asparagine glycans are attached at residues asparagine 79 and asparagine 116. The disordered stretch occupies residues 341-374 (QGCGNPKVNPQGPGPEEKRRRGKLAPRERPPSGT). Residues 355–370 (PEEKRRRGKLAPRERP) show a composition bias toward basic and acidic residues. 3 O-linked (Xyl...) (heparan sulfate) serine glycosylation sites follow: serine 486, serine 488, and serine 490. The tract at residues 505–534 (RKSSSSRTPLTHALPGLSEQEGQKTSAASC) is disordered. Residue serine 530 is the site of GPI-anchor amidated serine attachment. The propeptide at 531–558 (AASCPQPPTFLLPLLLFLALTVARPRWR) is removed in mature form.

This sequence belongs to the glypican family. In terms of processing, S-nitrosylated in a Cu(2+)-dependent manner. Nitric acid (NO) is released from the nitrosylated cysteines by ascorbate or by some other reducing agent, in a Cu(2+) or Zn(2+) dependent manner. This free nitric oxide is then capable of cleaving the heparan sulfate side chains. Post-translationally, N- and O-glycosylated. N-glycosylation is mainly of the complex type containing sialic acid. O-glycosylated with heparan sulfate. The heparan sulfate chains can be cleaved either by the action of heparanase or, degraded by a deaminative process that uses nitric oxide (NO) released from the S-nitrosylated cysteines. This process is triggered by ascorbate, or by some other reducing agent, in a Cu(2+)- or Zn(2+) dependent manner. Cu(2+) ions are provided by ceruloproteins such as APP, PRNP or CP which associate with GCP1 in intracellular compartments or lipid rafts. This cell-associated glypican is further processed to give rise to a medium-released species.

It is found in the cell membrane. It localises to the endosome. Its subcellular location is the secreted. The protein localises to the extracellular space. In terms of biological role, cell surface proteoglycan that bears heparan sulfate. Binds, via the heparan sulfate side chains, alpha-4 (V) collagen and participates in Schwann cell myelination. May act as a catalyst in increasing the rate of conversion of prion protein PRPN(C) to PRNP(Sc) via associating (via the heparan sulfate side chains) with both forms of PRPN, targeting them to lipid rafts and facilitating their interaction. Required for proper skeletal muscle differentiation by sequestering FGF2 in lipid rafts preventing its binding to receptors (FGFRs) and inhibiting the FGF-mediated signaling. This is Glypican-1 (GPC1) from Homo sapiens (Human).